Reading from the N-terminus, the 98-residue chain is Small ribosomal subunit protein bS6 (98 aa).

This sequence belongs to the bacterial ribosomal protein bS6 family.

Functionally, binds together with bS18 to 16S ribosomal RNA. This Lactobacillus johnsonii (strain CNCM I-12250 / La1 / NCC 533) protein is Small ribosomal subunit protein bS6.